The sequence spans 221 residues: 7-cyano-7-deazaguanine synthase (221 aa).

An ATP-binding site is contributed by 10–20 (FSGGQDSTTCL). Cysteine 186, cysteine 195, cysteine 198, and cysteine 201 together coordinate Zn(2+).

This sequence belongs to the QueC family. In terms of assembly, homodimer. Zn(2+) serves as cofactor.

The catalysed reaction is 7-carboxy-7-deazaguanine + NH4(+) + ATP = 7-cyano-7-deazaguanine + ADP + phosphate + H2O + H(+). Its pathway is purine metabolism; 7-cyano-7-deazaguanine biosynthesis. In terms of biological role, catalyzes the ATP-dependent conversion of 7-carboxy-7-deazaguanine (CDG) to 7-cyano-7-deazaguanine (preQ(0)). This Anoxybacillus flavithermus (strain DSM 21510 / WK1) protein is 7-cyano-7-deazaguanine synthase.